The chain runs to 657 residues: tRNA uridine 5-carboxymethylaminomethyl modification enzyme MnmG (657 aa).

Position 13–18 (13–18) interacts with FAD; the sequence is GGGHAG. 281 to 295 contributes to the NAD(+) binding site; sequence GPRYCPSVEDKINRF.

This sequence belongs to the MnmG family. Homodimer. Heterotetramer of two MnmE and two MnmG subunits. It depends on FAD as a cofactor.

It is found in the cytoplasm. In terms of biological role, NAD-binding protein involved in the addition of a carboxymethylaminomethyl (cmnm) group at the wobble position (U34) of certain tRNAs, forming tRNA-cmnm(5)s(2)U34. The polypeptide is tRNA uridine 5-carboxymethylaminomethyl modification enzyme MnmG (Acidovorax ebreus (strain TPSY) (Diaphorobacter sp. (strain TPSY))).